A 349-amino-acid polypeptide reads, in one-letter code: tRNA N6-adenosine threonylcarbamoyltransferase (349 aa).

His-115 and His-119 together coordinate Fe cation. Residues 137–141, Asp-170, Gly-183, and Asn-281 contribute to the substrate site; that span reads LASGG. Fe cation is bound at residue Asp-309.

This sequence belongs to the KAE1 / TsaD family. Fe(2+) is required as a cofactor.

Its subcellular location is the cytoplasm. It carries out the reaction L-threonylcarbamoyladenylate + adenosine(37) in tRNA = N(6)-L-threonylcarbamoyladenosine(37) in tRNA + AMP + H(+). In terms of biological role, required for the formation of a threonylcarbamoyl group on adenosine at position 37 (t(6)A37) in tRNAs that read codons beginning with adenine. Is involved in the transfer of the threonylcarbamoyl moiety of threonylcarbamoyl-AMP (TC-AMP) to the N6 group of A37, together with TsaE and TsaB. TsaD likely plays a direct catalytic role in this reaction. This Methylobacterium nodulans (strain LMG 21967 / CNCM I-2342 / ORS 2060) protein is tRNA N6-adenosine threonylcarbamoyltransferase.